The following is a 746-amino-acid chain: Alpha-1,4-glucan:maltose-1-phosphate maltosyltransferase (746 aa).

The disordered stretch occupies residues 1 to 43 (MAAVQHRATTRTSNTDNSTTKTKSKATSARKSPATKRKRVSAE). The segment covering 10–32 (TRTSNTDNSTTKTKSKATSARKS) has biased composition (low complexity). 3 residues coordinate alpha-maltose 1-phosphate: Lys-343, Gln-403, and Asp-438. The Nucleophile role is filled by Asp-473. Asn-474 contributes to the alpha-maltose 1-phosphate binding site. Catalysis depends on Glu-502, which acts as the Proton donor. Position 612-613 (612-613 (KY)) interacts with alpha-maltose 1-phosphate.

This sequence belongs to the glycosyl hydrolase 13 family. GlgE subfamily. Homodimer.

The catalysed reaction is alpha-maltose 1-phosphate + [(1-&gt;4)-alpha-D-glucosyl](n) = [(1-&gt;4)-alpha-D-glucosyl](n+2) + phosphate. Maltosyltransferase that uses maltose 1-phosphate (M1P) as the sugar donor to elongate linear or branched alpha-(1-&gt;4)-glucans. Is involved in a branched alpha-glucan biosynthetic pathway from trehalose, together with TreS, Mak and GlgB. This is Alpha-1,4-glucan:maltose-1-phosphate maltosyltransferase from Bifidobacterium longum (strain NCC 2705).